We begin with the raw amino-acid sequence, 314 residues long: Fibrinogen-like protein 1 (314 aa).

Positions M1 to A22 are cleaved as a signal peptide. Positions N25 to E59 form a coiled coil. Residues L76–D308 form the Fibrinogen C-terminal domain. Intrachain disulfides connect C85-C114 and C250-C263.

As to quaternary structure, homodimer. Interacts (via the Fibrinogen C-terminal domain) with LAG3 (via Ig-like domains 1 and 2).

The protein localises to the secreted. Functionally, immune suppressive molecule that inhibits antigen-specific T-cell activation by acting as a major ligand of LAG3. Responsible for LAG3 T-cell inhibitory function. Binds LAG3 independently from MHC class II (MHC-II). Secreted by, and promotes growth of, hepatocytes. The polypeptide is Fibrinogen-like protein 1 (Mesocricetus auratus (Golden hamster)).